The primary structure comprises 93 residues: MFEQRVNSDVLTVATVNSQDQVTQKPLRDSVKQALKNYFAQLNGQDVNDLYELVLAEVEQPLLDMVMQYTRGNQTRAAQMMGINRGTLRKKLK.

Positions 74–93 form a DNA-binding region, H-T-H motif; sequence QTRAAQMMGINRGTLRKKLK.

The protein belongs to the transcriptional regulatory Fis family. Homodimer.

In terms of biological role, activates ribosomal RNA transcription. Plays a direct role in upstream activation of rRNA promoters. In Proteus vulgaris, this protein is DNA-binding protein Fis.